An 839-amino-acid chain; its full sequence is Protein translocase subunit SecA (839 aa).

ATP contacts are provided by residues glutamine 86, 104-108, and aspartate 493; that span reads GEGKT. Residues 794-839 are disordered; it reads GIDMDNLQTSGPSDRPDPETSGDADPKNRAQRRAQEQERKRQNKKQ. Residues 807-833 are compositionally biased toward basic and acidic residues; the sequence is DRPDPETSGDADPKNRAQRRAQEQERK.

The protein belongs to the SecA family. As to quaternary structure, monomer and homodimer. Part of the essential Sec protein translocation apparatus which comprises SecA, SecYEG and auxiliary proteins SecDF. Other proteins may also be involved.

The protein localises to the cell membrane. The protein resides in the cytoplasm. The enzyme catalyses ATP + H2O + cellular proteinSide 1 = ADP + phosphate + cellular proteinSide 2.. Part of the Sec protein translocase complex. Interacts with the SecYEG preprotein conducting channel. Has a central role in coupling the hydrolysis of ATP to the transfer of proteins into and across the cell membrane, serving as an ATP-driven molecular motor driving the stepwise translocation of polypeptide chains across the membrane. This chain is Protein translocase subunit SecA, found in Brevibacillus brevis (strain 47 / JCM 6285 / NBRC 100599).